We begin with the raw amino-acid sequence, 317 residues long: Ribosomal protein L11 methyltransferase (317 aa).

S-adenosyl-L-methionine contacts are provided by Thr158, Gly179, Asp201, and Asn244.

This sequence belongs to the methyltransferase superfamily. PrmA family.

It is found in the cytoplasm. It catalyses the reaction L-lysyl-[protein] + 3 S-adenosyl-L-methionine = N(6),N(6),N(6)-trimethyl-L-lysyl-[protein] + 3 S-adenosyl-L-homocysteine + 3 H(+). Its function is as follows. Methylates ribosomal protein L11. The chain is Ribosomal protein L11 methyltransferase from Lactococcus lactis subsp. lactis (strain IL1403) (Streptococcus lactis).